The sequence spans 438 residues: Transmembrane protein 184C (438 aa).

The next 7 helical transmembrane spans lie at 17-37, 48-68, 86-106, 179-199, 212-232, 254-274, and 287-307; these read LVAV…VWEL, AWFI…WVIL, ILWM…YPGI, YTVV…LGIY, YLVI…LLFY, VVFV…VGVI, and AVAT…AAIA. The tract at residues 355-438 is disordered; sequence RGHPRKKLFP…KEPSDKSVDS (84 aa). 2 stretches are compositionally biased toward low complexity: residues 374-390 and 404-413; these read SLLS…ASSM and TVTPQTTPTT. At Ser422 the chain carries Phosphoserine. Residues 425–438 are compositionally biased toward basic and acidic residues; the sequence is IGEKKEPSDKSVDS.

It belongs to the TMEM184 family. As to expression, widely expressed with higher expression in lung, kidney, spleen, pancreas, thymus, prostate, testis, ovary, small intestine and thyroid.

Its subcellular location is the membrane. Its function is as follows. Possible tumor suppressor which may play a role in cell growth. The chain is Transmembrane protein 184C (TMEM184C) from Homo sapiens (Human).